A 450-amino-acid chain; its full sequence is Interferon-induced protein 75 (450 aa).

Residues 1-108 (MFTLTKALEK…IFRSFRNVGY (108 aa)) form the HSR domain. 2 disordered regions span residues 131 to 156 (CSLQ…APRV) and 170 to 225 (LDEQ…VKDD). A compositionally biased stretch (low complexity) spans 143–154 (QLSLPSHLSSAP). Phosphoserine is present on residues Ser-175 and Ser-177. The segment covering 197-212 (SRDHQRKDKEDSREMP) has biased composition (basic and acidic residues). Residue Ser-226 is modified to Phosphoserine. 2 disordered regions span residues 238-283 (VLCT…HGVQ) and 318-360 (AQTS…KNDA). The span at 245–267 (KKARRKKRLNWSNSKRGRQKKKP) shows a compositional bias: basic residues. Residues 251-266 (KRLNWSNSKRGRQKKK) carry the Nuclear localization signal motif. The span at 343–353 (TSTAGKTTQVP) shows a compositional bias: polar residues. The SAND domain occupies 358 to 439 (NDAVDFLSPT…RQLEQKGLLF (82 aa)).

The protein localises to the nucleus. The chain is Interferon-induced protein 75 (Ifi75) from Mus caroli (Ryukyu mouse).